Consider the following 593-residue polypeptide: MTSRRWFHPNITGVEAENLLLTRGVDGSFLARPSKSNPGDFTLSVRRNGAVTHIKIQNTGDYYDLYGGEKFATLAELVQYYMEHHGQLKEKNGDVIELKYPLNCADPTSERWFHGHLSGKEAEKLLTEKGKHGSFLVRESQSHPGDFVLSVRTGDDKGESNDGKSKVTHVMIRCQELKYDVGGGERFDSLTDLVEHYKKNPMVETLGTVLQLKQPLNTTRINAAEIESRVRELSKLAETTDKVKQGFWEEFETLQQQECKLLYSRKEGQRQENKNKNRYKNILPFDHTRVVLHDGDPNEPVSDYINANIIMPEFETKCNNSKPKKSYIATQGCLQNTVNDFWRMVFQENSRVIVMTTKEVERGKSKCVKYWPDEYALKEYGVMRVRNVKESAAHDYTLRELKLSKVGQGNTERTVWQYHFRTWPDHGVPSDPGGVLDFLEEVHHKQESIVDAGPVVVHCSAGIGRTGTFIVIDILIDIIREKGVDCDIDVPKTIQMVRSQRSGMVQTEAQYRFIYMAVQHYIETLQRRIEEEQKSKRKGHEYTNIKYSLVDQTSGDQSPLPPCTPTPPCAEMREDSARVYENVGLMQQQRSFR.

T2 is subject to N-acetylthreonine. 2 consecutive SH2 domains span residues 6-102 (WFHP…KYPL) and 112-216 (WFHG…KQPL). Phosphotyrosine is present on residues Y62 and Y66. A Tyrosine-protein phosphatase domain is found at 247 to 521 (FWEEFETLQQ…RFIYMAVQHY (275 aa)). Residues D425, 459–465 (CSAGIGR), and Q506 contribute to the substrate site. C459 (phosphocysteine intermediate) is an active-site residue. 2 positions are modified to phosphotyrosine; by PDGFR: Y542 and Y580.

Belongs to the protein-tyrosine phosphatase family. Non-receptor class 2 subfamily. Interacts with CD84 and with phosphorylated SIT1 and MZPL1. Interacts with FCRL4, FCRL6 and ANKHD1. Interacts with GAREM1 (tyrosine phosphorylated); the interaction increases MAPK/ERK activity and does not affect the GRB2/SOS complex formation. Interacts with PTPNS1 and BCAR3. Interacts with phosphorylated LIME1. Interacts with SHB and INPP5D/SHIP1. Interacts with KIR2DL1; the interaction is enhanced by ARRB2. Interacts with GAB2. Interacts with TERT; the interaction retains TERT in the nucleus. Interacts with PECAM1 and FER. Interacts with EPHA2 (activated); participates in PTK2/FAK1 dephosphorylation in EPHA2 downstream signaling. Interacts with MILR1 (tyrosine phosphorylated). Interacts with FLT1 (tyrosine-phosphorylated), FLT3 (tyrosine-phosphorylated), FLT4 (tyrosine-phosphorylated), KIT and GRB2. Interacts with ROS1; mediates PTPN11 phosphorylation. Interacts with PDGFRA (tyrosine phosphorylated). Interacts with PDGFRB (tyrosine phosphorylated); this interaction increases the PTPN11 phosphatase activity. Interacts (via SH2 domain) with TEK/TIE2 (tyrosine phosphorylated). Interacts with CEACAM1 (via cytoplasmic domain); this interaction depends on the monomer/dimer equilibrium and is phosphorylation-dependent. Interacts with MPIG6B (via ITIM motif). Interacts with SIGLEC10. Interacts with Lilrb4a (when tyrosine phosphorylated). Interacts with SIGLEC10. Interacts with CLEC12B (via ITIM motif); this interaction triggers dephosphorylation and activation of PTPN11. Interacts (via SH2 domains) with NEDD9/CAS-L; the interaction is enhanced when NEDD9/CAS-L is tyrosine phosphorylated. Interacts with PIRB; when PIRB is phosphorylated by LYN at 'Tyr-794' and 'Tyr-824'. Phosphorylated on Tyr-542 and Tyr-580 upon receptor protein tyrosine kinase activation; which creates a binding site for GRB2 and other SH2-containing proteins. Phosphorylated upon activation of the receptor-type kinase FLT3. Phosphorylated by activated PDGFRB. Phosphorylated upon activation of the receptor-type kinase PDGFRA. In terms of tissue distribution, highly expressed in brain, heart and kidney.

The protein localises to the cytoplasm. It catalyses the reaction O-phospho-L-tyrosyl-[protein] + H2O = L-tyrosyl-[protein] + phosphate. Acts downstream of various receptor and cytoplasmic protein tyrosine kinases to participate in the signal transduction from the cell surface to the nucleus. Positively regulates MAPK signal transduction pathway. Dephosphorylates GAB1, ARHGAP35 and EGFR. Dephosphorylates ROCK2 at 'Tyr-722' resulting in stimulation of its RhoA binding activity. Dephosphorylates CDC73. Dephosphorylates SOX9 on tyrosine residues, leading to inactivate SOX9 and promote ossification. Dephosphorylates tyrosine-phosphorylated NEDD9/CAS-L. The protein is Tyrosine-protein phosphatase non-receptor type 11 (Ptpn11) of Mus musculus (Mouse).